We begin with the raw amino-acid sequence, 398 residues long: 1-deoxy-D-xylulose 5-phosphate reductoisomerase (398 aa).

Residues Thr10, Gly11, Ser12, Ile13, Gly36, Asn38, and Asn124 each contribute to the NADPH site. Residue Lys125 coordinates 1-deoxy-D-xylulose 5-phosphate. Glu126 is an NADPH binding site. Asp150 lines the Mn(2+) pocket. 1-deoxy-D-xylulose 5-phosphate is bound by residues Ser151, Glu152, Ser186, and His209. Glu152 lines the Mn(2+) pocket. Gly215 serves as a coordination point for NADPH. 1-deoxy-D-xylulose 5-phosphate-binding residues include Ser222, Asn227, Lys228, and Glu231. Glu231 is a Mn(2+) binding site.

It belongs to the DXR family. Homodimer. Mg(2+) serves as cofactor. Mn(2+) is required as a cofactor.

It catalyses the reaction 2-C-methyl-D-erythritol 4-phosphate + NADP(+) = 1-deoxy-D-xylulose 5-phosphate + NADPH + H(+). Its pathway is isoprenoid biosynthesis; isopentenyl diphosphate biosynthesis via DXP pathway; isopentenyl diphosphate from 1-deoxy-D-xylulose 5-phosphate: step 1/6. In terms of biological role, catalyzes the NADPH-dependent rearrangement and reduction of 1-deoxy-D-xylulose-5-phosphate (DXP) to 2-C-methyl-D-erythritol 4-phosphate (MEP). This is 1-deoxy-D-xylulose 5-phosphate reductoisomerase from Pectobacterium atrosepticum (strain SCRI 1043 / ATCC BAA-672) (Erwinia carotovora subsp. atroseptica).